A 404-amino-acid chain; its full sequence is Phosphoglycerate kinase (404 aa).

Substrate-binding positions include 22–24, R37, 60–63, R120, and R160; these read DFN and HLGR. Residues K215, E333, and 360–363 each bind ATP; that span reads GGDS.

Belongs to the phosphoglycerate kinase family. As to quaternary structure, monomer.

The protein resides in the cytoplasm. The catalysed reaction is (2R)-3-phosphoglycerate + ATP = (2R)-3-phospho-glyceroyl phosphate + ADP. The protein operates within carbohydrate degradation; glycolysis; pyruvate from D-glyceraldehyde 3-phosphate: step 2/5. This is Phosphoglycerate kinase from Latilactobacillus sakei subsp. sakei (strain 23K) (Lactobacillus sakei subsp. sakei).